We begin with the raw amino-acid sequence, 399 residues long: Protein LIGULELESS 1 (399 aa).

Residues 1–28 are disordered; sequence MMNLSAAANGRDEFPPYVVPSNAAAPPP. Positions 15-24 are enriched in low complexity; the sequence is PPYVVPSNAA. The SBP-type zinc finger occupies 182–260; it reads PPRCQAEGCK…ADHNRRRRKS (79 aa). Residues Cys185, Cys190, Cys207, His210, Cys227, Cys230, His234, and Cys246 each coordinate Zn(2+). The short motif at 243-259 is the Bipartite nuclear localization signal element; that stretch reads KKSCRKRLADHNRRRRK. A disordered region spans residues 250-292; it reads LADHNRRRRKSKPSDADAGDKKRAHANKAAAAKDKAESSSKNM. Residues 261–270 are compositionally biased toward basic and acidic residues; sequence KPSDADAGDK.

As to expression, leaf ligular region, blade and sheath.

It localises to the nucleus. In terms of biological role, involved in the formation of ligules and auricles during leaf organogenesis. In Zea mays (Maize), this protein is Protein LIGULELESS 1 (LG1).